The chain runs to 343 residues: 3-dehydroquinate synthase (343 aa).

NAD(+) is bound by residues 86-90 (GALLD), 110-111 (TT), K123, and K132. The Zn(2+) site is built by E165, H229, and H243.

This sequence belongs to the sugar phosphate cyclases superfamily. Dehydroquinate synthase family. The cofactor is Co(2+). Zn(2+) serves as cofactor. It depends on NAD(+) as a cofactor.

The protein localises to the cytoplasm. It catalyses the reaction 7-phospho-2-dehydro-3-deoxy-D-arabino-heptonate = 3-dehydroquinate + phosphate. It functions in the pathway metabolic intermediate biosynthesis; chorismate biosynthesis; chorismate from D-erythrose 4-phosphate and phosphoenolpyruvate: step 2/7. In terms of biological role, catalyzes the conversion of 3-deoxy-D-arabino-heptulosonate 7-phosphate (DAHP) to dehydroquinate (DHQ). In Pyrobaculum islandicum (strain DSM 4184 / JCM 9189 / GEO3), this protein is 3-dehydroquinate synthase.